A 452-amino-acid chain; its full sequence is MCRVFMIAGTHSGAGKTTLSLGIMGVLSKKYNVRPFKVGPDYIDTAYHRYVTRNFSVNLDLFMLGEENLKNLFYKNASRADVSIIEGVMGLYDGIDTTSRGSSAHIAKLVNVPVVLVVDASSMAASVSALIMGYIYYDKDVDIRGVILNKVGSERHYTLLKEVIERDLNIEVFGYLPKDVELELPERHLGLLPVYETENLDKKLEKLYGYIENCIDVEKLMNLTVKPPDFIEKEDRVLKEKKVKIAYAYDEAFNFYYKESLETLEEMGAHLIPFSPLDDERLPEGTEGLYIGGGFPEVFAKRLSENESMLREIKEAVEKGMPVYAECGGLMYLSKGIRDLEGNRYSMVGVYDFEVVMTKKLQRFGYVEAEITMDNVLFKKGERIKGHEFHYSRIEGFSQNASYIVNRPGKEEKWECGFVHKNCLASFVHINLYTYKEGVKRFLDRCSSFGRK.

Positions 244 to 437 constitute a GATase cobBQ-type domain; that stretch reads KIAYAYDEAF…VHINLYTYKE (194 aa). The active-site Nucleophile is cysteine 327.

This sequence belongs to the CobB/CbiA family. Mg(2+) is required as a cofactor.

It carries out the reaction cob(II)yrinate + 2 L-glutamine + 2 ATP + 2 H2O = cob(II)yrinate a,c diamide + 2 L-glutamate + 2 ADP + 2 phosphate + 2 H(+). It participates in cofactor biosynthesis; adenosylcobalamin biosynthesis; cob(II)yrinate a,c-diamide from sirohydrochlorin (anaerobic route): step 10/10. Its function is as follows. Catalyzes the ATP-dependent amidation of the two carboxylate groups at positions a and c of cobyrinate, using either L-glutamine or ammonia as the nitrogen source. In Caldanaerobacter subterraneus subsp. tengcongensis (strain DSM 15242 / JCM 11007 / NBRC 100824 / MB4) (Thermoanaerobacter tengcongensis), this protein is Cobyrinate a,c-diamide synthase.